A 579-amino-acid polypeptide reads, in one-letter code: MAENESNVVVDQGQTKLSDLWTKEDYWAIWLGFVILIAGMWLFLANPSPEFAQKVDKANGVMAAEAARAPFKTLAYYKAQDDKGKLQGMDTPSGKAIGAFLTTPGAWASDPLEAFVLSKEAADERNAAAKAKFESAKVKSDAALAAAQAAEAAAAGAAFADAALNTEAQAKIAEWRAEHAKMKAAEKKTKTKPFNIATSLPMLMVALGLFFAVGMKFMGHDVPKFLVGFIGVFFVAVLALMMGHQSTMKYWGIGAEAWAIIIGMLVANTVGTPSFIKPALQVEYYIKTGLVLLGAEVLFDKIIAIGIPGIFVAWVVTPIVLICTFIFGQKILKMPSKTLNIVISSDMSVCGTSAAIATAAACRAKKEELTLAIGLSLVFTAIMMIAMPAFIKAVGMPQVLGGAWMGGTIDATGAVAAAGAFLGEKALYVAATIKMIQNVLIGVVAFGVAVYWCARVECREGHSVGWIEIWHRFPKFVLGFLAASVLFSVISGSLGSDMSQIMVNQGVLKGLSSPLRNWFFCLAFTSIGLATNFRELAHYFKGGKPLILYVAGQSFNLVLTLAMAYVMFYIVFPEITAKI.

11 helical membrane passes run 26 to 45, 193 to 215, 225 to 243, 250 to 272, 305 to 327, 369 to 391, 401 to 423, 436 to 456, 476 to 495, 515 to 534, and 549 to 571; these read YWAI…LFLA, PFNI…AVGM, FLVG…LMMG, YWGI…TVGT, IGIP…TFIF, LTLA…PAFI, GGAW…AFLG, IQNV…CARV, FVLG…GSLG, LRNW…TNFR, and YVAG…FYIV.

The protein belongs to the UPF0324 family.

Its subcellular location is the cell membrane. This Nitratidesulfovibrio vulgaris (strain ATCC 29579 / DSM 644 / CCUG 34227 / NCIMB 8303 / VKM B-1760 / Hildenborough) (Desulfovibrio vulgaris) protein is UPF0324 membrane protein DVU_2133.